Reading from the N-terminus, the 492-residue chain is Bifunctional protein GlmU (492 aa).

Residues 1–241 (MTFRGDTAVL…NALVAGVNNR (241 aa)) are pyrophosphorylase. Residues 12 to 15 (LAAG), lysine 26, glutamine 83, 88 to 89 (GT), 112 to 114 (SGD), glycine 151, glutamate 166, asparagine 181, and asparagine 239 each bind UDP-N-acetyl-alpha-D-glucosamine. Aspartate 114 serves as a coordination point for Mg(2+). Asparagine 239 contacts Mg(2+). The linker stretch occupies residues 242–262 (VQLAELSAELNRRIVATHQVA). The interval 263–492 (GVTIIDPATT…KQSQQKSEPD (230 aa)) is N-acetyltransferase. UDP-N-acetyl-alpha-D-glucosamine is bound by residues arginine 344 and lysine 362. Catalysis depends on histidine 374, which acts as the Proton acceptor. 2 residues coordinate UDP-N-acetyl-alpha-D-glucosamine: tyrosine 377 and asparagine 388. Acetyl-CoA is bound by residues alanine 391, 397–398 (NY), serine 416, and alanine 434. The tract at residues 461 to 492 (VQRKRPGSAAAQAAEKASTRTGKQSQQKSEPD) is disordered. A compositionally biased stretch (polar residues) spans 479-492 (TRTGKQSQQKSEPD).

The protein in the N-terminal section; belongs to the N-acetylglucosamine-1-phosphate uridyltransferase family. In the C-terminal section; belongs to the transferase hexapeptide repeat family. Homotrimer. Mg(2+) serves as cofactor.

Its subcellular location is the cytoplasm. It carries out the reaction alpha-D-glucosamine 1-phosphate + acetyl-CoA = N-acetyl-alpha-D-glucosamine 1-phosphate + CoA + H(+). The catalysed reaction is N-acetyl-alpha-D-glucosamine 1-phosphate + UTP + H(+) = UDP-N-acetyl-alpha-D-glucosamine + diphosphate. It functions in the pathway nucleotide-sugar biosynthesis; UDP-N-acetyl-alpha-D-glucosamine biosynthesis; N-acetyl-alpha-D-glucosamine 1-phosphate from alpha-D-glucosamine 6-phosphate (route II): step 2/2. The protein operates within nucleotide-sugar biosynthesis; UDP-N-acetyl-alpha-D-glucosamine biosynthesis; UDP-N-acetyl-alpha-D-glucosamine from N-acetyl-alpha-D-glucosamine 1-phosphate: step 1/1. It participates in bacterial outer membrane biogenesis; LPS lipid A biosynthesis. Its function is as follows. Catalyzes the last two sequential reactions in the de novo biosynthetic pathway for UDP-N-acetylglucosamine (UDP-GlcNAc). The C-terminal domain catalyzes the transfer of acetyl group from acetyl coenzyme A to glucosamine-1-phosphate (GlcN-1-P) to produce N-acetylglucosamine-1-phosphate (GlcNAc-1-P), which is converted into UDP-GlcNAc by the transfer of uridine 5-monophosphate (from uridine 5-triphosphate), a reaction catalyzed by the N-terminal domain. The sequence is that of Bifunctional protein GlmU from Mycobacterium leprae (strain Br4923).